Consider the following 487-residue polypeptide: NADH-quinone oxidoreductase subunit N (487 aa).

13 consecutive transmembrane segments (helical) span residues 9–29 (PVLP…LGVF), 38–58 (VSVL…SLGG), 73–93 (FAGF…AMSL), 108–128 (VLVL…DFIA), 161–181 (FVLG…LYGF), 208–228 (IIAG…AVPF), 240–260 (PTPV…CLLV), 277–297 (VVTF…VVQT), 306–326 (SSIG…TLGI), 328–348 (GVLI…AVIL), 374–394 (AFVM…AGFW), 408–430 (LYTL…LRIV), and 452–472 (LVMA…APLV).

It belongs to the complex I subunit 2 family. In terms of assembly, NDH-1 is composed of 14 different subunits. Subunits NuoA, H, J, K, L, M, N constitute the membrane sector of the complex.

It localises to the cell inner membrane. The enzyme catalyses a quinone + NADH + 5 H(+)(in) = a quinol + NAD(+) + 4 H(+)(out). Functionally, NDH-1 shuttles electrons from NADH, via FMN and iron-sulfur (Fe-S) centers, to quinones in the respiratory chain. The immediate electron acceptor for the enzyme in this species is believed to be ubiquinone. Couples the redox reaction to proton translocation (for every two electrons transferred, four hydrogen ions are translocated across the cytoplasmic membrane), and thus conserves the redox energy in a proton gradient. This is NADH-quinone oxidoreductase subunit N from Paramagnetospirillum magneticum (strain ATCC 700264 / AMB-1) (Magnetospirillum magneticum).